A 116-amino-acid chain; its full sequence is Large ribosomal subunit protein uL18 (116 aa).

It belongs to the universal ribosomal protein uL18 family. As to quaternary structure, part of the 50S ribosomal subunit; part of the 5S rRNA/L5/L18/L25 subcomplex. Contacts the 5S and 23S rRNAs.

This is one of the proteins that bind and probably mediate the attachment of the 5S RNA into the large ribosomal subunit, where it forms part of the central protuberance. The sequence is that of Large ribosomal subunit protein uL18 from Shewanella woodyi (strain ATCC 51908 / MS32).